Reading from the N-terminus, the 142-residue chain is Small ribosomal subunit protein uS19 (142 aa).

An N-acetylserine modification is found at Ser2. Glycyl lysine isopeptide (Lys-Gly) (interchain with G-Cter in ubiquitin) cross-links involve residues Lys24, Lys35, and Lys64.

It belongs to the universal ribosomal protein uS19 family. Component of the small ribosomal subunit (SSU). Mature yeast ribosomes consist of a small (40S) and a large (60S) subunit. The 40S small subunit contains 1 molecule of ribosomal RNA (18S rRNA) and 33 different proteins (encoded by 57 genes). The large 60S subunit contains 3 rRNA molecules (25S, 5.8S and 5S rRNA) and 46 different proteins (encoded by 81 genes).

The protein resides in the cytoplasm. Its function is as follows. Component of the ribosome, a large ribonucleoprotein complex responsible for the synthesis of proteins in the cell. The small ribosomal subunit (SSU) binds messenger RNAs (mRNAs) and translates the encoded message by selecting cognate aminoacyl-transfer RNA (tRNA) molecules. The large subunit (LSU) contains the ribosomal catalytic site termed the peptidyl transferase center (PTC), which catalyzes the formation of peptide bonds, thereby polymerizing the amino acids delivered by tRNAs into a polypeptide chain. The nascent polypeptides leave the ribosome through a tunnel in the LSU and interact with protein factors that function in enzymatic processing, targeting, and the membrane insertion of nascent chains at the exit of the ribosomal tunnel. uS19 is involved in the nuclear export of the small ribosomal subunit precursor. Has a role in the late stage of the assembly of pre-40S particles within the nucleus and controls their export to the cytoplasm. This Saccharomyces cerevisiae (strain ATCC 204508 / S288c) (Baker's yeast) protein is Small ribosomal subunit protein uS19.